The following is a 187-amino-acid chain: Elongation factor P (187 aa).

It belongs to the elongation factor P family.

Its subcellular location is the cytoplasm. The protein operates within protein biosynthesis; polypeptide chain elongation. Involved in peptide bond synthesis. Stimulates efficient translation and peptide-bond synthesis on native or reconstituted 70S ribosomes in vitro. Probably functions indirectly by altering the affinity of the ribosome for aminoacyl-tRNA, thus increasing their reactivity as acceptors for peptidyl transferase. In Nocardia farcinica (strain IFM 10152), this protein is Elongation factor P.